The primary structure comprises 578 residues: MPRGLELLIAQTILQGFDAQYGRFLEVTSGAQQRFEQADWHAVQQAMKNRIHLYDHHVGLVVEQLRCITNGQSTDAAFLLRVKEHYTRLLPDYPRFEIAESFFNSVYCRLFDHRSLTPERLFIFSSQPERRFRTIPRPLAKDFHPDHGWESLLMRVISDLPLRLRWQNKSRDIHYIIRHLTETLGTDNLAESHLQVANELFYRNKAAWLVGKLITSSGTLPFLLPIHQTDDGELFIDTCLTTTAEASIVFGFARSYFMVYAPLPAALVEWLREILPGKTTAELYMAIGCQKHAKTESYREYLVYLQGCNEQFIEAPGIRGMVMLVFTLPGFDRVFKVIKDKFAPQKEMSAAHVRACYQLVKEHDRVGRMADTQEFENFVLEKRHISPALMELLLQEAAEKITDLGEQIVIRHLYIERRMVPLNIWLEQVEGQQLRDAIEEYGNAIRQLAAANIFPGDMLFKNFGVTRHGRVVFYDYDEICYMTEVNFRDIPPPRYPEDELASEPWYSVSPGDVFPEEFRHWLCADPRIGPLFEEMHADLFRADYWRALQNRIREGHVEDVYAYRRRQRFSVRYGEMLF.

ATP is bound by residues 315 to 321 and K336; that span reads APGIRGM. D371 is an active-site residue.

This sequence belongs to the AceK family.

Its subcellular location is the cytoplasm. The enzyme catalyses L-seryl-[isocitrate dehydrogenase] + ATP = O-phospho-L-seryl-[isocitrate dehydrogenase] + ADP + H(+). Functionally, bifunctional enzyme which can phosphorylate or dephosphorylate isocitrate dehydrogenase (IDH) on a specific serine residue. This is a regulatory mechanism which enables bacteria to bypass the Krebs cycle via the glyoxylate shunt in response to the source of carbon. When bacteria are grown on glucose, IDH is fully active and unphosphorylated, but when grown on acetate or ethanol, the activity of IDH declines drastically concomitant with its phosphorylation. The chain is Isocitrate dehydrogenase kinase/phosphatase from Escherichia coli (strain ATCC 8739 / DSM 1576 / NBRC 3972 / NCIMB 8545 / WDCM 00012 / Crooks).